Reading from the N-terminus, the 290-residue chain is Arylamine N-acetyltransferase 1 (290 aa).

Met1 is subject to N-acetylmethionine. Catalysis depends on Cys68, which acts as the Acyl-thioester intermediate. CoA is bound by residues Thr103 and Gly104. 106–107 (IH) contacts substrate. Residues His107 and Asp122 contribute to the active site. Tyr208 and Ser214 together coordinate CoA.

The protein belongs to the arylamine N-acetyltransferase family.

Its subcellular location is the cytoplasm. It carries out the reaction an arylamine + acetyl-CoA = an N-acetylarylamine + CoA. This chain is Arylamine N-acetyltransferase 1 (NAT1), found in Oryctolagus cuniculus (Rabbit).